Reading from the N-terminus, the 51-residue chain is 2,3,4,5-tetrahydropyridine-2,6-dicarboxylate N-succinyltransferase (51 aa).

It belongs to the transferase hexapeptide repeat family. In terms of assembly, homotrimer.

It is found in the cytoplasm. The catalysed reaction is (S)-2,3,4,5-tetrahydrodipicolinate + succinyl-CoA + H2O = (S)-2-succinylamino-6-oxoheptanedioate + CoA. It participates in amino-acid biosynthesis; L-lysine biosynthesis via DAP pathway; LL-2,6-diaminopimelate from (S)-tetrahydrodipicolinate (succinylase route): step 1/3. This Klebsiella oxytoca protein is 2,3,4,5-tetrahydropyridine-2,6-dicarboxylate N-succinyltransferase (dapD).